An 891-amino-acid chain; its full sequence is Alanine--tRNA ligase (891 aa).

4 residues coordinate Zn(2+): histidine 576, histidine 580, cysteine 684, and histidine 688.

This sequence belongs to the class-II aminoacyl-tRNA synthetase family. Zn(2+) serves as cofactor.

The protein localises to the cytoplasm. The catalysed reaction is tRNA(Ala) + L-alanine + ATP = L-alanyl-tRNA(Ala) + AMP + diphosphate. Functionally, catalyzes the attachment of alanine to tRNA(Ala) in a two-step reaction: alanine is first activated by ATP to form Ala-AMP and then transferred to the acceptor end of tRNA(Ala). Also edits incorrectly charged Ser-tRNA(Ala) and Gly-tRNA(Ala) via its editing domain. In Orientia tsutsugamushi (strain Boryong) (Rickettsia tsutsugamushi), this protein is Alanine--tRNA ligase.